The sequence spans 580 residues: DNA mismatch repair protein MutL (580 aa).

It belongs to the DNA mismatch repair MutL/HexB family.

This protein is involved in the repair of mismatches in DNA. It is required for dam-dependent methyl-directed DNA mismatch repair. May act as a 'molecular matchmaker', a protein that promotes the formation of a stable complex between two or more DNA-binding proteins in an ATP-dependent manner without itself being part of a final effector complex. This Chlamydia felis (strain Fe/C-56) (Chlamydophila felis) protein is DNA mismatch repair protein MutL.